Reading from the N-terminus, the 226-residue chain is 8-oxoguanine DNA glycosylase/AP lyase (226 aa).

Active-site residues include lysine 149 and aspartate 167.

Belongs to the type-2 OGG1 family.

It carries out the reaction 2'-deoxyribonucleotide-(2'-deoxyribose 5'-phosphate)-2'-deoxyribonucleotide-DNA = a 3'-end 2'-deoxyribonucleotide-(2,3-dehydro-2,3-deoxyribose 5'-phosphate)-DNA + a 5'-end 5'-phospho-2'-deoxyribonucleoside-DNA + H(+). Functionally, catalyzes the excision of an oxidatively damaged form of guanine (7,8-dihydro-8-oxoguanine = 8-oxoG) from DNA. Also cleaves the DNA backbone at apurinic/apyrimidinic sites (AP sites). The polypeptide is 8-oxoguanine DNA glycosylase/AP lyase (Aquifex aeolicus (strain VF5)).